A 317-amino-acid chain; its full sequence is Olfactory receptor 2F2 (317 aa).

The Extracellular portion of the chain corresponds to methionine 1–isoleucine 25. Asparagine 5 carries an N-linked (GlcNAc...) asparagine glycan. A helical transmembrane segment spans residues serine 26–isoleucine 49. At arginine 50 to threonine 57 the chain is on the cytoplasmic side. A helical transmembrane segment spans residues proline 58–proline 79. The Extracellular segment spans residues glutamine 80–glutamine 100. Cysteine 97 and cysteine 189 are joined by a disulfide. Residues leucine 101–tyrosine 120 form a helical membrane-spanning segment. The Cytoplasmic segment spans residues aspartate 121–glycine 139. A helical transmembrane segment spans residues leucine 140–valine 158. Topologically, residues glutamine 159–asparagine 195 are extracellular. The chain crosses the membrane as a helical span at residues glutamate 196–isoleucine 219. Topologically, residues arginine 220–lysine 236 are cytoplasmic. A helical transmembrane segment spans residues alanine 237–tyrosine 259. Over isoleucine 260–lysine 272 the chain is Extracellular. Residues leucine 273–leucine 292 traverse the membrane as a helical segment. At arginine 293 to threonine 317 the chain is on the cytoplasmic side.

This sequence belongs to the G-protein coupled receptor 1 family.

It localises to the cell membrane. Its function is as follows. Odorant receptor. This chain is Olfactory receptor 2F2 (OR2F2), found in Homo sapiens (Human).